We begin with the raw amino-acid sequence, 359 residues long: MGGAVSAGEDNDELIDNLKEAQYIRTDLVEQAFRAIDRADYYLEEFKENAYKDLAWKHGNIHLSAPCIYSEVMEALDLQPGLSFLNLGSGTGYLSSMVGLILGPFGVNHGVELHSDVTEYAKQKLDVFIRTSDSFDKFDFCEPSFVTGNCLEIAPDCCQYDRVYCGAGVQKEHEEYMKNLLKVGGILVMPLEEKLTKITRTGPSAWETKKILAVSFAPLVQPCRSESGQSRLVQLPPPAVRSLQDLARLAIRGSIKRAMRQEATRGGGLKNTPMFKRRRVRRRRMETIVFLDKEVFASRISNPSDDTSCEDAEEDRREVAERTLQETKPEPPVNFLRQRVLRLPLPDPLKYYLLYYREK.

The N-myristoyl glycine moiety is linked to residue Gly-2. Residue Ser-64 is part of the active site. AdoMet binding motif regions lie at residues 85 to 94, 160 to 164, and 181 to 191; these read LNLGSGTGYL, YDRVY, and LKVGGILVMPL. The segment at 240–250 is BC-box; it reads VRSLQDLARLA. The interval 301-328 is disordered; the sequence is SNPSDDTSCEDAEEDRREVAERTLQETK. The span at 314 to 328 shows a compositional bias: basic and acidic residues; that stretch reads EDRREVAERTLQETK. The tract at residues 343–346 is CUL-box; it reads LPLP.

This sequence belongs to the methyltransferase superfamily. L-isoaspartyl/D-aspartyl protein methyltransferase family.

Its subcellular location is the cytoplasm. In terms of biological role, may act as a substrate recognition component of an ECS (Elongin BC-CUL5-SOCS-box protein) E3 ubiquitin ligase complex which mediates the ubiquitination and subsequent proteasomal degradation of target proteins. May bind to the methyltransferase cofactor S-adenosylmethionine (AdoMet) via the N-terminal AdoMet binding motif, but probably does not display methyltransferase activity. The chain is Protein-L-isoaspartate O-methyltransferase domain-containing protein 2 (Pcmtd2) from Mus musculus (Mouse).